A 356-amino-acid polypeptide reads, in one-letter code: Altered inheritance of mitochondria protein 23, mitochondrial (356 aa).

A mitochondrion-targeting transit peptide spans 1–32; the sequence is MLKVPLSDVLSQKMLFLKSFRYFHCTKYFSRD.

Belongs to the AIM23 family.

It is found in the mitochondrion. In Saccharomyces cerevisiae (strain RM11-1a) (Baker's yeast), this protein is Altered inheritance of mitochondria protein 23, mitochondrial (AIM23).